A 391-amino-acid polypeptide reads, in one-letter code: ATP phosphoribosyltransferase regulatory subunit (391 aa).

This sequence belongs to the class-II aminoacyl-tRNA synthetase family. HisZ subfamily. Heteromultimer composed of HisG and HisZ subunits.

The protein resides in the cytoplasm. The protein operates within amino-acid biosynthesis; L-histidine biosynthesis; L-histidine from 5-phospho-alpha-D-ribose 1-diphosphate: step 1/9. In terms of biological role, required for the first step of histidine biosynthesis. May allow the feedback regulation of ATP phosphoribosyltransferase activity by histidine. This Bacillus pumilus (strain SAFR-032) protein is ATP phosphoribosyltransferase regulatory subunit.